Consider the following 308-residue polypeptide: MSWLEKILEKSNIVSSRKASIPEGVWTKCTSCEQVLYYAELERNLEVCPKCDHHMRMKARRRLETFLDQGERVELGEELEPQDKLKFKDSKRYKERLAAAQKASGEKDALVVMKGAVLGVPVVACAFEFSFMGGSMGSVVGARFVRAVEAAIEHNCGLICFSASGGARMQEALMSLMQMAKTSAALERLSDKGLPFISVMTDPTMGGVSASLAMLGDINIGEPKALIGFAGRRVIEQTVREELPEGFQRSEFLLEHGAIDMIVDRRDMRQRVASLLAKMTGQASPLVVSVNDAPNEVPYAVPEANKKG.

Residues 25 to 294 (VWTKCTSCEQ…PLVVSVNDAP (270 aa)) form the CoA carboxyltransferase N-terminal domain. The Zn(2+) site is built by cysteine 29, cysteine 32, cysteine 48, and cysteine 51. The segment at 29 to 51 (CTSCEQVLYYAELERNLEVCPKC) adopts a C4-type zinc-finger fold.

This sequence belongs to the AccD/PCCB family. In terms of assembly, acetyl-CoA carboxylase is a heterohexamer composed of biotin carboxyl carrier protein (AccB), biotin carboxylase (AccC) and two subunits each of ACCase subunit alpha (AccA) and ACCase subunit beta (AccD). Zn(2+) is required as a cofactor.

The protein localises to the cytoplasm. It catalyses the reaction N(6)-carboxybiotinyl-L-lysyl-[protein] + acetyl-CoA = N(6)-biotinyl-L-lysyl-[protein] + malonyl-CoA. It participates in lipid metabolism; malonyl-CoA biosynthesis; malonyl-CoA from acetyl-CoA: step 1/1. Functionally, component of the acetyl coenzyme A carboxylase (ACC) complex. Biotin carboxylase (BC) catalyzes the carboxylation of biotin on its carrier protein (BCCP) and then the CO(2) group is transferred by the transcarboxylase to acetyl-CoA to form malonyl-CoA. This chain is Acetyl-coenzyme A carboxylase carboxyl transferase subunit beta, found in Vibrio cholerae serotype O1 (strain ATCC 39315 / El Tor Inaba N16961).